A 621-amino-acid polypeptide reads, in one-letter code: (-)-beta-phellandrene synthase 1, chloroplastic (621 aa).

A chloroplast-targeting transit peptide spans 1–49 (MALALVSVAPLVSMRRSLFSSPYELKSIDKTIPNLVMCRKRMSGTPSIR). Aspartate 372, aspartate 376, and aspartate 524 together coordinate Mg(2+). The short motif at 372 to 376 (DDIYD) is the DDXXD motif element.

This sequence belongs to the terpene synthase family. Tpsd subfamily. Requires Mg(2+) as cofactor. Mn(2+) is required as a cofactor.

The protein resides in the plastid. The protein localises to the chloroplast. The catalysed reaction is (2E)-geranyl diphosphate = (-)-beta-phellandrene + diphosphate. The protein operates within terpene metabolism; oleoresin biosynthesis. Its pathway is secondary metabolite biosynthesis; terpenoid biosynthesis. Its function is as follows. Monoterpene synthase (TPS) involved in the biosynthesis of monoterpene natural products included in conifer oleoresin secretions and volatile emissions; these compounds contribute to biotic and abiotic stress defense against herbivores and pathogens. Catalyzes the conversion of (2E)-geranyl diphosphate (GPP) to (-)-beta-phellandrene and, to a lower extent, to (-)-alpha-phellandrene. The protein is (-)-beta-phellandrene synthase 1, chloroplastic of Pinus contorta (Shore pine).